Here is a 252-residue protein sequence, read N- to C-terminus: SPbeta prophage-derived uncharacterized protein YomH (252 aa).

The protein is SPbeta prophage-derived uncharacterized protein YomH (yomH) of Bacillus subtilis (strain 168).